The following is a 518-amino-acid chain: Putative cysteine ligase BshC (518 aa).

A coiled-coil region spans residues 404 to 474; that stretch reads AAASAERLAA…RARQLTRLKR (71 aa).

The protein belongs to the BshC family.

This is Putative cysteine ligase BshC from Deinococcus geothermalis (strain DSM 11300 / CIP 105573 / AG-3a).